The chain runs to 686 residues: Glycine--tRNA ligase beta subunit (686 aa).

This sequence belongs to the class-II aminoacyl-tRNA synthetase family. In terms of assembly, tetramer of two alpha and two beta subunits.

It localises to the cytoplasm. The catalysed reaction is tRNA(Gly) + glycine + ATP = glycyl-tRNA(Gly) + AMP + diphosphate. This Halothermothrix orenii (strain H 168 / OCM 544 / DSM 9562) protein is Glycine--tRNA ligase beta subunit.